The primary structure comprises 204 residues: Probable nicotinate-nucleotide adenylyltransferase (204 aa).

The protein belongs to the NadD family.

It carries out the reaction nicotinate beta-D-ribonucleotide + ATP + H(+) = deamido-NAD(+) + diphosphate. Its pathway is cofactor biosynthesis; NAD(+) biosynthesis; deamido-NAD(+) from nicotinate D-ribonucleotide: step 1/1. Catalyzes the reversible adenylation of nicotinate mononucleotide (NaMN) to nicotinic acid adenine dinucleotide (NaAD). The sequence is that of Probable nicotinate-nucleotide adenylyltransferase from Clostridium beijerinckii (strain ATCC 51743 / NCIMB 8052) (Clostridium acetobutylicum).